The following is a 334-amino-acid chain: Biotin synthase (334 aa).

A Radical SAM core domain is found at 54–281; it reads QAIQLSTLLS…KSYVRLSAGR (228 aa). [4Fe-4S] cluster contacts are provided by C69, C73, and C76. [2Fe-2S] cluster is bound by residues C113, C144, C204, and R276.

The protein belongs to the radical SAM superfamily. Biotin synthase family. In terms of assembly, homodimer. The cofactor is [4Fe-4S] cluster. It depends on [2Fe-2S] cluster as a cofactor.

The catalysed reaction is (4R,5S)-dethiobiotin + (sulfur carrier)-SH + 2 reduced [2Fe-2S]-[ferredoxin] + 2 S-adenosyl-L-methionine = (sulfur carrier)-H + biotin + 2 5'-deoxyadenosine + 2 L-methionine + 2 oxidized [2Fe-2S]-[ferredoxin]. It participates in cofactor biosynthesis; biotin biosynthesis; biotin from 7,8-diaminononanoate: step 2/2. Catalyzes the conversion of dethiobiotin (DTB) to biotin by the insertion of a sulfur atom into dethiobiotin via a radical-based mechanism. The protein is Biotin synthase of Haemophilus ducreyi (strain 35000HP / ATCC 700724).